Consider the following 2458-residue polypeptide: Acetyl-CoA carboxylase 2 (2458 aa).

A Phosphoserine modification is found at S35. The segment at S35–A155 is disordered. The span at S51 to R60 shows a compositional bias: polar residues. Phosphothreonine is present on T70. Over residues A77–R87 the composition is skewed to basic and acidic residues. A phosphoserine mark is found at S91 and S95. Positions P103–S146 are enriched in polar residues. Phosphoserine occurs at positions 169, 175, 192, 195, and 200. The tract at residues S174–R193 is disordered. A Phosphothreonine modification is found at T207. S220 is subject to Phosphoserine. S222 carries the phosphoserine; by AMPK modification. The region spanning V259–A761 is the Biotin carboxylation domain. In terms of domain architecture, ATP-grasp spans D414–M609. Residue G458 to G463 participates in ATP binding. Residue S469 is modified to Phosphoserine. Mg(2+)-binding residues include E567, E580, and N582. Mn(2+)-binding residues include E567, E580, and N582. R584 is a catalytic residue. A Phosphothreonine modification is found at T753. Residues F888–E962 enclose the Biotinyl-binding domain. N6-biotinyllysine is present on K929. S1340 bears the Phosphoserine mark. At T1342 the chain carries Phosphothreonine. Residues S1360 and S1405 each carry the phosphoserine modification. The CoA carboxyltransferase N-terminal domain occupies P1695–T2025. The interval P1695–Q2345 is carboxyltransferase. CoA is bound by residues R1934, K2238, and R2240. Residues P2029–Q2345 form the CoA carboxyltransferase C-terminal domain.

As to quaternary structure, monomer, homodimer, and homotetramer. Forms filamentous polymers. Interacts with MID1IP1; interaction with MID1IP1 promotes oligomerization and increases its activity in a citrate-dependent manner. Biotin is required as a cofactor. Requires Mg(2+) as cofactor. Mn(2+) serves as cofactor. Post-translationally, the biotin cofactor is covalently attached to the central biotinyl-binding domain and is required for the catalytic activity. Phosphorylation at Ser-222 by AMPK inactivates the enzyme. Required for the maintenance of skeletal muscle lipid and glucose homeostasis. Widely expressed with highest levels in heart, skeletal muscle, liver, adipose tissue, mammary gland, adrenal gland and colon. Isoform 3 is expressed in skeletal muscle, adipose tissue and liver (at protein level). Isoform 3 is detected at high levels in adipose tissue with lower levels in heart, liver, skeletal muscle and testis.

The protein localises to the mitochondrion. It carries out the reaction hydrogencarbonate + acetyl-CoA + ATP = malonyl-CoA + ADP + phosphate + H(+). It functions in the pathway lipid metabolism; malonyl-CoA biosynthesis; malonyl-CoA from acetyl-CoA: step 1/1. Activity is increased by oligomerization of the protein into filaments. The oligomerization and the activity of the enzyme are inhibited by phosphorylation at Ser-222. Inhibited by its product, malonyl-CoA. Activated by citrate. Activation by MID1IP1 is citrate-dependent. Soraphen A, inhibits the enzyme by preventing the formation of active filamentous oligomers. In terms of biological role, mitochondrial enzyme that catalyzes the carboxylation of acetyl-CoA to malonyl-CoA and plays a central role in fatty acid metabolism. Catalyzes a 2 steps reaction starting with the ATP-dependent carboxylation of the biotin carried by the biotin carboxyl carrier (BCC) domain followed by the transfer of the carboxyl group from carboxylated biotin to acetyl-CoA. Through the production of malonyl-CoA that allosterically inhibits carnitine palmitoyltransferase 1 at the mitochondria, negatively regulates fatty acid oxidation. Together with its cytosolic isozyme ACACA, which is involved in de novo fatty acid biosynthesis, promotes lipid storage. The polypeptide is Acetyl-CoA carboxylase 2 (Homo sapiens (Human)).